Here is a 424-residue protein sequence, read N- to C-terminus: MMRKLAILSVSSFLFVEALFQEYQCYGSSSNTRVLNELNYDNAGTNLYNELEMNYYGKQENWYSLKKNSRSLGENDDGNNNNGDNNREGKDEDKRDGNNEDNETLRKPKHKKLKQPGDGNPDPNANPNVDPNANPNVDPNANPNVDPNANPNANPNANPNANPNANPNANPNANPNANPNANPNANPNANPNANPNANPNANPNANPNANPNANPNANPNANPNANPNANPNANPNANPNANPNANPNANPNANPNANPNANPNANPNANPNANPNANPNANPNANPNANPNANPNANPNKNNQGNGQGHNMPNDPNRNVDENANANNAVKNNNNEEPSDKHIEQYLKKIQNSLSTEWSPCSVTCGNGIQVRIKPGSANKPKDELDYENDIEKKICKMEKCSSVFNVVNSSIGLIMVLSFLFLN.

The first 18 residues, 1-18, serve as a signal peptide directing secretion; that stretch reads MMRKLAILSVSSFLFVEA. The interval 69-339 is disordered; it reads SRSLGENDDG…VKNNNNEEPS (271 aa). A compositionally biased stretch (basic and acidic residues) spans 85 to 106; it reads NNREGKDEDKRDGNNEDNETLR. The interval 104–111 is required for the binding to heparan sulfate proteoglycans (HSPGs) on the surface of host hepatocytes; that stretch reads TLRKPKHK. Residues 112-116 are region I; contains the proteolytic cleavage site; that stretch reads KLKQP. Residues 120–300 show a composition bias toward low complexity; sequence NPDPNANPNV…PNANPNANPN (181 aa). 44 consecutive repeat copies span residues 123–126, 127–130, 131–134, 135–138, 139–142, 143–146, 147–150, 151–154, 155–158, 159–162, 163–166, 167–170, 171–174, 175–178, 179–182, 183–186, 187–190, 191–194, 195–198, 199–202, 203–206, 207–210, 211–214, 215–218, 219–222, 223–226, 227–230, 231–234, 235–238, 239–242, 243–246, 247–250, 251–254, 255–258, 259–262, 263–266, 267–270, 271–274, 275–278, 279–282, 283–286, 287–290, 291–294, and 295–298. Residues 123 to 298 are 44 X 4 AA tandem repeats of P-N-[AV]-[ND]; that stretch reads PNANPNVDPN…ANPNANPNAN (176 aa). Positions 301 to 316 are enriched in polar residues; that stretch reads KNNQGNGQGHNMPNDP. Residues 322–336 are compositionally biased toward low complexity; sequence ENANANNAVKNNNNE. The TSP type-1 domain maps to 349–402; it reads KIQNSLSTEWSPCSVTCGNGIQVRIKPGSANKPKDELDYENDIEKKICKMEKCS. 2 disulfides stabilise this stretch: Cys-361–Cys-396 and Cys-365–Cys-401. O-linked (Fuc) threonine glycosylation occurs at Thr-364. Cys-401 carries GPI-anchor amidated cysteine lipidation. The propeptide at 402–424 is removed in mature form; sequence SSVFNVVNSSIGLIMVLSFLFLN.

It belongs to the plasmodium circumsporozoite protein family. During host cell invasion, proteolytically cleaved at the cell membrane in the region I by a papain-like cysteine protease of parasite origin. Cleavage is triggered by the sporozoite contact with highly sulfated heparan sulfate proteoglycans (HSPGs) present on the host hepatocyte cell surface. Cleavage exposes the TSP type-1 (TSR) domain and is required for productive invasion of host hepatocytes but not for adhesion to the host cell membrane. Cleavage is dispensable for sporozoite development in the oocyst, motility and for traversal of host and vector cells. In terms of processing, O-glycosylated; maybe by POFUT2.

Its subcellular location is the cell membrane. It localises to the cytoplasm. Its function is as follows. Essential sporozoite protein. In the mosquito vector, required for sporozoite development in the oocyst, migration through the vector hemolymph and entry into the vector salivary glands. In the vertebrate host, required for sporozoite migration through the host dermis and infection of host hepatocytes. Binds to highly sulfated heparan sulfate proteoglycans (HSPGs) on the surface of host hepatocytes. In the vertebrate host, binds to highly sulfated heparan sulfate proteoglycans (HSPGs) on the surface of host hepatocytes and is required for sporozoite invasion of the host hepatocytes. The polypeptide is Circumsporozoite protein (Plasmodium falciparum (isolate t4 / Thailand)).